Here is a 319-residue protein sequence, read N- to C-terminus: Curved DNA-binding protein (319 aa).

Positions 5–69 (DYYKILGVEP…QKRAEFDEIR (65 aa)) constitute a J domain.

The protein localises to the cytoplasm. It is found in the nucleoid. Its function is as follows. DNA-binding protein that preferentially recognizes a curved DNA sequence. It is probably a functional analog of DnaJ; displays overlapping activities with DnaJ, but functions under different conditions, probably acting as a molecular chaperone in an adaptive response to environmental stresses other than heat shock. Lacks autonomous chaperone activity; binds native substrates and targets them for recognition by DnaK. Its activity is inhibited by the binding of CbpM. The chain is Curved DNA-binding protein from Pseudomonas putida (strain ATCC 47054 / DSM 6125 / CFBP 8728 / NCIMB 11950 / KT2440).